Consider the following 69-residue polypeptide: Amphipathic peptide Hp1404 (69 aa).

An N-terminal signal peptide occupies residues 1-23 (MKTQFAILMITVVLMQMLVQTEG). Residue F37 is modified to Phenylalanine amide. Residues 41–69 (GLKNLDQLDDSFDSDLSDADVKLLREMFK) constitute a propeptide that is removed on maturation.

Belongs to the non-disulfide-bridged peptide (NDBP) superfamily. Short antimicrobial peptide (group 4) family. As to expression, expressed by the venom gland.

The protein resides in the secreted. Its subcellular location is the target cell membrane. Its activity is regulated as follows. Antibacterial activity is decreased by serum. Functionally, antimicrobial peptide that acts by inducing concentration-dependent membrane disruption, implying a membrane-lytic mode of action. Acts with potent activity against Gram-positive bacteria (MIC=4.04-16.16 uM) including methicillin-resistant S.aureus (MRSA). Its activity on Gram-negative bacteria is controversial. Li and colleagues (2014) describe no activity towards E.coli and P.aeruginosa, while Kim and colleagues (2018) describe a potent activity towards P.aeruginosa (MIC=3.13-12.5 uM), and Luo and colleagues (2021) describe a potent activity against antibiotic-sensitive and -resistant Acinetobacter baumannii strains (MIC=3.2-10 uM). On S.aureus, possibly acts by impairing an unknown intracellular target and/or by interacting with the membrane, leading to the lateral expansion of the membrane area at high MIC concentrations, resulting in the formation of mesosome-like structures that leads to cell lysis. Shows moderate inhibition of P.aeruginosa biofilm formation. Administration of this peptide at sub-MIC concentrations in multiple treatments does not lead to resistance in S.aureus. Exhibits low toxicity and hemolytic activity against mammalian cell lines and BALB/c mice. In vivo, improves the survival rate of the MRSA infected BALB/c mice in the peritonitis model. This Heterometrus petersii (Asian forest scorpion) protein is Amphipathic peptide Hp1404.